Here is a 171-residue protein sequence, read N- to C-terminus: MDKKSLYKYLLLRSTGDMRRAKSPTIMTRVTNNVYLGNYKNAMNAPSSEVKFKYVLNLTMDKYTLPNSNINIIHIPLVDDTTTDISKYFDDVTAFLSKCDQRNEPVLVHCVAGVNRSGAMILAYLMSKNKESSPMLYFLYVYHSMRDLRGAFVENPSFKRQIIEKYVIDKN.

The 149-residue stretch at 23–171 (SPTIMTRVTN…IIEKYVIDKN (149 aa)) folds into the Tyrosine-protein phosphatase domain. The active-site Phosphocysteine intermediate is the cysteine 110.

The protein belongs to the protein-tyrosine phosphatase family. Non-receptor class dual specificity subfamily. As to quaternary structure, homodimer.

It is found in the virion. Its subcellular location is the host cytoplasm. The enzyme catalyses O-phospho-L-tyrosyl-[protein] + H2O = L-tyrosyl-[protein] + phosphate. The catalysed reaction is O-phospho-L-seryl-[protein] + H2O = L-seryl-[protein] + phosphate. Its activity is regulated as follows. Inhibited by NSC-62914, NSC-28086, NSC-105687, NSC-23173, 540211 and 217691 with IC50 values of 48, 51, 212, 342, 4 and 11 uM, respectively. Functionally, serine/tyrosine phosphatase which down-regulates cellular antiviral response by dephosphorylating activated host STAT1 and blocking interferon (IFN)-stimulated innate immune responses. Dephosphorylates the OPG144 protein. In Homo sapiens (Human), this protein is Dual specificity protein phosphatase OPG106 (OPG106).